The chain runs to 139 residues: MMWWALWCAVVVAAGSGVAAAPAPDSLSPLDMVQMDSSAPDDETLYAMSPMAARYSAGAPWLYLLADMPRDSQTGSGRVKRRMPSLSIDQPMSVLRQKLSQEMERKQQAFRAAVNRNFLNDIGKRGFQWTPSVQAVRYI.

The N-terminal stretch at 1-20 is a signal peptide; sequence MMWWALWCAVVVAAGSGVAA. Positions 21 to 79 are excised as a propeptide; it reads APAPDSLSPLDMVQMDSSAPDDETLYAMSPMAARYSAGAPWLYLLADMPRDSQTGSGRV. I122 is modified (isoleucine amide).

It belongs to the sauvagine/corticotropin-releasing factor/urotensin I family. In terms of tissue distribution, expressed in corpora cardiaca (CC), corpora allata (CA), antennal lobe (AL) and gnathal ganglion (GNG) (at protein level). Expression in CC and CA detected in all animals, in GNG in most animals, expression in AL detected in few animals (at protein level).

The protein localises to the secreted. Functionally, regulation of fluid secretion. This is Diuretic hormone 41 from Agrotis ipsilon (Black cutworm moth).